We begin with the raw amino-acid sequence, 603 residues long: Growth-regulating factor 6 (603 aa).

The segment at 34–58 is disordered; that stretch reads KHGRGNAGDQEHEWRPPAKQARGGD. Residues 158–193 enclose the QLQ domain; that stretch reads PFTPSQWIELEHQALIYKYLAANSPVPHSLLIPIRR. Residues 223 to 267 form the WRC domain; that stretch reads DPEPGRCRRTDGKKWRCSRDAVADQKYCERHMNRGRHRSRKHVEG. 2 consecutive short sequence motifs (bipartite nuclear localization signal) follow at residues 228-238 and 256-263; these read RCRRTDGKKWR and RGRHRSRK. Residues 561–571 are compositionally biased toward low complexity; it reads FGSVSSSTGSS. The tract at residues 561 to 582 is disordered; the sequence is FGSVSSSTGSSPRLENHSVYDG.

This sequence belongs to the GRF family.

The protein localises to the nucleus. Its function is as follows. Transcription activator that plays a regulatory role in gibberellin-induced stem elongation. The polypeptide is Growth-regulating factor 6 (GRF6) (Oryza sativa subsp. japonica (Rice)).